We begin with the raw amino-acid sequence, 158 residues long: Lipoprotein signal peptidase (158 aa).

4 consecutive transmembrane segments (helical) span residues 7-27, 38-58, 67-87, and 95-115; these read LFWI…YWVV, ILPG…FSLF, WLSL…PVLE, and GLIL…GYVV. Active-site residues include Asp116 and Asp132. A helical membrane pass occupies residues 125-145; sequence FAVFNMADSFISIGIVCLLLA.

It belongs to the peptidase A8 family.

It localises to the cell inner membrane. It carries out the reaction Release of signal peptides from bacterial membrane prolipoproteins. Hydrolyzes -Xaa-Yaa-Zaa-|-(S,diacylglyceryl)Cys-, in which Xaa is hydrophobic (preferably Leu), and Yaa (Ala or Ser) and Zaa (Gly or Ala) have small, neutral side chains.. The protein operates within protein modification; lipoprotein biosynthesis (signal peptide cleavage). Its function is as follows. This protein specifically catalyzes the removal of signal peptides from prolipoproteins. The sequence is that of Lipoprotein signal peptidase from Trichormus variabilis (strain ATCC 29413 / PCC 7937) (Anabaena variabilis).